The following is a 101-amino-acid chain: Protein RnfH (101 aa).

Belongs to the UPF0125 (RnfH) family.

The protein is Protein RnfH of Coxiella burnetii (strain CbuK_Q154) (Coxiella burnetii (strain Q154)).